We begin with the raw amino-acid sequence, 433 residues long: Enolase (433 aa).

Gln167 lines the (2R)-2-phosphoglycerate pocket. Glu209 serves as the catalytic Proton donor. The Mg(2+) site is built by Asp246, Glu291, and Asp318. (2R)-2-phosphoglycerate is bound by residues Lys343, Arg372, Ser373, and Lys394. Lys343 functions as the Proton acceptor in the catalytic mechanism.

Belongs to the enolase family. As to quaternary structure, component of the RNA degradosome, a multiprotein complex involved in RNA processing and mRNA degradation. Requires Mg(2+) as cofactor.

The protein resides in the cytoplasm. Its subcellular location is the secreted. It is found in the cell surface. The catalysed reaction is (2R)-2-phosphoglycerate = phosphoenolpyruvate + H2O. It functions in the pathway carbohydrate degradation; glycolysis; pyruvate from D-glyceraldehyde 3-phosphate: step 4/5. Functionally, catalyzes the reversible conversion of 2-phosphoglycerate (2-PG) into phosphoenolpyruvate (PEP). It is essential for the degradation of carbohydrates via glycolysis. The chain is Enolase from Photobacterium profundum (strain SS9).